The sequence spans 501 residues: Cobyric acid synthase (501 aa).

In terms of domain architecture, GATase cobBQ-type spans Asn251–Phe446. Catalysis depends on Cys332, which acts as the Nucleophile. His438 is a catalytic residue.

This sequence belongs to the CobB/CobQ family. CobQ subfamily.

Its pathway is cofactor biosynthesis; adenosylcobalamin biosynthesis. Its function is as follows. Catalyzes amidations at positions B, D, E, and G on adenosylcobyrinic A,C-diamide. NH(2) groups are provided by glutamine, and one molecule of ATP is hydrogenolyzed for each amidation. In Clostridium botulinum (strain Alaska E43 / Type E3), this protein is Cobyric acid synthase.